The sequence spans 347 residues: tRNA pseudouridine synthase D (347 aa).

The active-site Nucleophile is the aspartate 81. The 147-residue stretch at 158-304 (GVPNYFGNQR…MRHDRRAIAL (147 aa)) folds into the TRUD domain.

Belongs to the pseudouridine synthase TruD family.

It catalyses the reaction uridine(13) in tRNA = pseudouridine(13) in tRNA. Its function is as follows. Responsible for synthesis of pseudouridine from uracil-13 in transfer RNAs. The chain is tRNA pseudouridine synthase D from Vibrio vulnificus (strain YJ016).